The sequence spans 1051 residues: MADIANYKDAASNRHLRFKLQSLSRRLDELEEATKNLQKAEDELLDLQDKVIQAEGSNSSMLAEIEVLRQRVLKIEGKDEEIKRAEDLCHTMKEKLEEEENLTRELKSEIDRLQKRMADLEKLEEALSRSKNECSQLCLSLNEERNLTKKISSELEMLRVKVKELESSEDRLEKTEQSLVSELEKLKSLTLSFVNERKYLNEKEKENEKLIKELTQKLEQNKKINRDHMRNASTFLERNDLRIEDGISSTLPSKESRRKGSLDYLKQVENETRDKSENEKNRNQEDNKVKDLNQEIEKLKTQIKHFESLEEELKKMRAKNNDLQDNYLTELNKNRSLASQLEEVKLQVKKQKELGNGDIEGEDAFLLGRGRHERTKLKGHGGEVSVSKHTSREQSPQHKRERLRNRGFALNDEHCSLSNKQVSSPAFTNKRAAKASNMGVGPDSGTQETKRTEDRLAPGSSQSEGKKGREQPSVLSRYPPAAQDHTKVWRGNPKPGTESGLKGKVEKTTRTFSDSAHGSVPNDVVGKGDKTSDFSSEAHCGKRGQVPGHASQVTQVAESGCSKAIGALASSQRASSEGLSKGKKAANGLETDANFPHSKAPILSKYPYSSRSQENILQGFSVPNKEGVDHSVAVVMEDSSQHEALRCRVIKSSGREKPDSDDDLDIESLVTAKLVNTTITPEPEPKLQPNSREKVKSRGGTRTPLFENDKNAAVENDSAKSMRSSSNAVEFPDANCAGVKNQRPFSPREALRSRAIIKPVIIDKDVKKIMGGSGTEVVLEKQKSTPKSVTSKVTSSITIYPSDSSGPRAVPTEAPRERHTSTSNIQVGPPELTSVSNHISSPLELSIHKHDITLQLTEAERVGDGSPKNRAETVVSRSSILIKPSDSVERNSHAFPAETIRWKSHSTSSEVASSDTRHITVRNAWKSKRDLKCSEDPPTRIGRNVEATNAYTQRSSTDFLELEQPRSHPPEQGTRKVGNSGDAPELSSRRTQSSLTASEVLTRRNRIGDAVTAASWNHSSNVVSLTFLPSALICLTEDLGNTEGWEMLNLR.

A2 bears the N-acetylalanine mark. Positions 11-354 (ASNRHLRFKL…KLQVKKQKEL (344 aa)) form a coiled coil. 4 disordered regions span residues 247–293 (ISST…KDLN), 374–401 (RTKL…HKRE), 432–554 (AAKA…SQVT), and 569–601 (ASSQ…SKAP). Residues 254–293 (KESRRKGSLDYLKQVENETRDKSENEKNRNQEDNKVKDLN) are compositionally biased toward basic and acidic residues. 8 positions are modified to phosphoserine: S256, S261, S395, S513, S571, S575, S612, and S660. Residues 569 to 578 (ASSQRASSEG) show a composition bias toward polar residues. A disordered region spans residues 675 to 727 (VNTTITPEPEPKLQPNSREKVKSRGGTRTPLFENDKNAAVENDSAKSMRSSSN). Position 680 is a phosphothreonine (T680). S691 bears the Phosphoserine mark. Residues 707–720 (ENDKNAAVENDSAK) show a composition bias toward basic and acidic residues. Phosphoserine is present on S746. A compositionally biased stretch (low complexity) spans 789–799 (VTSKVTSSITI). The interval 789-837 (VTSKVTSSITIYPSDSSGPRAVPTEAPRERHTSTSNIQVGPPELTSVSN) is disordered. Positions 834–884 (SVSNHISSPLELSIHKHDITLQLTEAERVGDGSPKNRAETVVSRSSILIKP) are required for interaction with FLNA. S906 is modified (phosphoserine). Positions 929-938 (RDLKCSEDPP) are enriched in basic and acidic residues. Positions 929–1000 (RDLKCSEDPP…TQSSLTASEV (72 aa)) are disordered. 2 stretches are compositionally biased toward polar residues: residues 946–958 (EATN…SSTD) and 989–999 (RRTQSSLTASE). T957 carries the phosphothreonine modification. S993 is subject to Phosphoserine.

As to quaternary structure, component of the CERF-1 ISWI chromatin remodeling complex (also called the CECR2-containing remodeling factor (CERF) complex) at least composed of CECR2 and SMARCA1. Component of the CERF-5 ISWI chromatin remodeling complex at least composed of CECR2 and SMARCA5/SNF2H. LUZP1 is detected as part of the CERF-1 and CERF-5 complexes in embryonic stem (ES) cells where it is involved in complex stabilization but is not detected in the complexes in the testis. Interacts (via C-terminus) with LIMA1/EPLIN; both proteins restrict ciliation and may work together to regulate this process. Interacts with myosin light chain MYL9; the interaction results in inhibition of phosphorylation of MYL9 by DAPK3. Interacts with DAPK3; the interaction is likely to occur throughout the cell cycle and reduces the LUZP1-mediated suppression of MYL9 phosphorylation. Interacts with the chromosomal passenger complex (CPC); CPC kinase activity is required for localization of LUZP1 to the centromere. Expressed in cerebral cortex, cerebellum, hippocampus and brain stem.

The protein resides in the cytoplasm. It is found in the cytoskeleton. It localises to the microtubule organizing center. The protein localises to the centrosome. Its subcellular location is the cilium basal body. The protein resides in the midbody. It is found in the chromosome. It localises to the centromere. The protein localises to the spindle. Its subcellular location is the stress fiber. The protein resides in the nucleus. It is found in the cell projection. It localises to the dendrite. The protein localises to the perikaryon. Its subcellular location is the cell junction. The protein resides in the tight junction. Functionally, F-actin cross-linking protein. Stabilizes actin and acts as a negative regulator of primary cilium formation. Positively regulates the phosphorylation of both myosin II and protein phosphatase 1 regulatory subunit PPP1R12A/MYPT1 and promotes the assembly of myosin II stacks within actin stress fibers. Inhibits the phosphorylation of myosin light chain MYL9 by DAPK3 and suppresses the constriction velocity of the contractile ring during cytokinesis. Binds to microtubules and promotes epithelial cell apical constriction by up-regulating levels of diphosphorylated myosin light chain (MLC) through microtubule-dependent inhibition of MLC dephosphorylation by myosin phosphatase. Involved in regulation of cell migration, nuclear size and centriole number, probably through regulation of the actin cytoskeleton. Component of the CERF-1 and CERF-5 chromatin remodeling complexes in embryonic stem cells where it acts to stabilize the complexes. Plays a role in embryonic brain and cardiovascular development. The sequence is that of Leucine zipper protein 1 (Luzp1) from Rattus norvegicus (Rat).